A 370-amino-acid polypeptide reads, in one-letter code: MKIKDAKKPSFPWFGMDIGGTLVKLSYFEPIDITAEEEQEEVESLKSIRKYLTSNVAYGSTGIRDVHLELKDLTLFGRRGNLHFIRFPTQDLPTFIQMGRDKNFSTLQTVLCATGGGAYKFEKDFRTIGNLHLHKLDELDCLVKGLLYIDSVSFNGQAECYYFANASEPERCQKMPFNLDDPYPLLVVNIGSGVSILAVHSKDNYKRVTGTSLGGGTFLGLCSLLTGCESFEEALEMASKGDSTQADKLVRDIYGGDYERFGLPGWAVASSFGNMIYKEKRESVSKEDLARATLVTITNNIGSVARMCAVNEKINRVVFVGNFLRVNTLSMKLLAYALDYWSKGQLKALFLEHEGYFGAVGALLGLPNFS.

Catalysis depends on E138, which acts as the Proton acceptor. Residues S192, S195, and R207 each contribute to the acetyl-CoA site.

It belongs to the type II pantothenate kinase family. In terms of assembly, homodimer. As to expression, highly expressed in the liver.

It localises to the cytoplasm. The catalysed reaction is (R)-pantothenate + ATP = (R)-4'-phosphopantothenate + ADP + H(+). It functions in the pathway cofactor biosynthesis; coenzyme A biosynthesis; CoA from (R)-pantothenate: step 1/5. With respect to regulation, subject to allosteric regulation, exists in two distinct conformational states, a catalytically incompetent (or open) conformation stabilized by the binding of acetyl(acyl)-CoA, and a catalytically competent (or closed) conformation stabilized by ATP-binding. Inhibited by acetyl-CoA and its thioesters which act as allosteric inhibitors and compete with the ATP-binding site. Inhibited by sulfonylureas and thiazolidinediones. Activated by oleoylethanolamide, palmitoyl-carnitine and oleoyl-carnitine. In terms of biological role, catalyzes the phosphorylation of pantothenate to generate 4'-phosphopantothenate in the first and rate-determining step of coenzyme A (CoA) synthesis. In Homo sapiens (Human), this protein is Pantothenate kinase 3 (PANK3).